The following is a 323-amino-acid chain: Formyl peptide receptor-related sequence 4 (323 aa).

Residues 1-29 lie on the Extracellular side of the membrane; the sequence is MEVNISMPLNGSEVVFYDSTTSRVLWILS. Residues N4 and N10 are each glycosylated (N-linked (GlcNAc...) asparagine). Residues 30–50 traverse the membrane as a helical segment; the sequence is LVVLFITFVLGVLGNGLVIWV. Residues 51–66 are Cytoplasmic-facing; sequence AGFQMAHTVTTVSYLN. The chain crosses the membrane as a helical span at residues 67-87; sequence LALSDLSFMATLPLHIISMVM. The Extracellular portion of the chain corresponds to 88-99; sequence RGKWLFGWFLCK. An intrachain disulfide couples C98 to C176. The helical transmembrane segment at 100-120 threads the bilayer; sequence LVHIIANINLFVSIFLITLIA. Residues 121–144 lie on the Cytoplasmic side of the membrane; sequence MDRCICVLCPVWSQNHRTVSLARK. A helical membrane pass occupies residues 145 to 165; the sequence is VVLGAWIFALLLTLPHFLFLT. The Extracellular segment spans residues 166 to 202; it reads TVRDARGDVYCISKFESWVATSEEQLKVSVIAATASG. A helical transmembrane segment spans residues 203 to 223; it reads IINFIIGFSMPMSFIAICYGL. Over 224-241 the chain is Cytoplasmic; the sequence is MAAKICRRGFVNSSRPLR. The chain crosses the membrane as a helical span at residues 242–262; it reads VLTAVAVSFFVCWFPFQLIML. The Extracellular portion of the chain corresponds to 263-280; the sequence is LGNIFNNETLSIIHMLVN. N269 carries N-linked (GlcNAc...) asparagine glycosylation. A helical membrane pass occupies residues 281-301; that stretch reads PANTLASFNSCLNPILYVFLG. The Cytoplasmic portion of the chain corresponds to 302-323; sequence QEFRDRLIYSLYASLERALRED.

It belongs to the G-protein coupled receptor 1 family. As to expression, expressed in 0.6 % of a subset of sensory neurons located in the apical layer of the vomeronasal organ. Each neuron appears to express only one receptor gene.

It is found in the cell membrane. Its function is as follows. May have an olfactory function associated with the identification of pathogens or of pathogenic states. In Mus musculus (Mouse), this protein is Formyl peptide receptor-related sequence 4 (Fpr-rs4).